The sequence spans 582 residues: Eukaryotic translation initiation factor 2A (582 aa).

4 WD repeats span residues 21-63 (GPPK…NIVN), 73-124 (LDLP…NVKS), 273-314 (PKNG…IFDF), and 358-402 (TASD…LHKY). The interval 436 to 533 (DLPTQESKPA…NTGDPETDKK (98 aa)) is disordered. Residues 482 to 580 (SKTALKNQKK…LLKELEDLEI (99 aa)) are a coiled coil. Residues 495 to 506 (KKAAKQESKMDE) show a composition bias toward basic and acidic residues. Residues 510–522 (SDSTNVQNNTPVA) show a composition bias toward polar residues.

It belongs to the WD repeat EIF2A family.

Functionally, functions in the early steps of protein synthesis of a small number of specific mRNAs. Acts by directing the binding of methionyl-tRNAi to 40S ribosomal subunits. In contrast to the eIF-2 complex, it binds methionyl-tRNAi to 40S subunits in a codon-dependent manner, whereas the eIF-2 complex binds methionyl-tRNAi to 40S subunits in a GTP-dependent manner. In Xenopus laevis (African clawed frog), this protein is Eukaryotic translation initiation factor 2A (eif2a).